The following is a 64-amino-acid chain: Large ribosomal subunit protein uL29 (64 aa).

The protein belongs to the universal ribosomal protein uL29 family.

In Cupriavidus necator (strain ATCC 17699 / DSM 428 / KCTC 22496 / NCIMB 10442 / H16 / Stanier 337) (Ralstonia eutropha), this protein is Large ribosomal subunit protein uL29.